The chain runs to 185 residues: Ribosome-recycling factor (185 aa).

It belongs to the RRF family.

The protein resides in the cytoplasm. Its function is as follows. Responsible for the release of ribosomes from messenger RNA at the termination of protein biosynthesis. May increase the efficiency of translation by recycling ribosomes from one round of translation to another. The protein is Ribosome-recycling factor of Coxiella burnetii (strain CbuK_Q154) (Coxiella burnetii (strain Q154)).